The primary structure comprises 215 residues: Eukaryotic translation initiation factor 4E (215 aa).

Residues 1–27 (MAERDSEPRVNIIRPDDEPEVEEERVP) form a disordered region. Ser207 is modified (phosphoserine; by PKC).

The protein belongs to the eukaryotic initiation factor 4E family. EIF4F is a multi-subunit complex, the composition of which varies with external and internal environmental conditions. It is composed of at least eIF4A, eIF4E and eIF4G. eIF4E is also known to interact with other partners. Phosphorylation increases the ability of the protein to bind to mRNA caps and to form the eIF4F complex.

In terms of biological role, recognizes and binds the 7-methylguanosine-containing mRNA cap during an early step in the initiation of protein synthesis and facilitates ribosome binding by inducing the unwinding of the mRNAs secondary structures. The sequence is that of Eukaryotic translation initiation factor 4E from Aplysia californica (California sea hare).